The chain runs to 447 residues: N-succinylarginine dihydrolase (447 aa).

Residues 19–28 (AGLSFGNEAS), Asn-110, and 137–138 (HR) contribute to the substrate site. Glu-174 is an active-site residue. Arg-212 provides a ligand contact to substrate. Residue His-248 is part of the active site. Residues Asp-250 and Asn-359 each contribute to the substrate site. Cys-365 functions as the Nucleophile in the catalytic mechanism.

It belongs to the succinylarginine dihydrolase family. As to quaternary structure, homodimer.

The enzyme catalyses N(2)-succinyl-L-arginine + 2 H2O + 2 H(+) = N(2)-succinyl-L-ornithine + 2 NH4(+) + CO2. The protein operates within amino-acid degradation; L-arginine degradation via AST pathway; L-glutamate and succinate from L-arginine: step 2/5. Catalyzes the hydrolysis of N(2)-succinylarginine into N(2)-succinylornithine, ammonia and CO(2). The sequence is that of N-succinylarginine dihydrolase from Escherichia coli O8 (strain IAI1).